A 226-amino-acid chain; its full sequence is NAD(P)H-quinone oxidoreductase subunit K, chloroplastic (226 aa).

[4Fe-4S] cluster contacts are provided by Cys43, Cys44, Cys108, and Cys139.

It belongs to the complex I 20 kDa subunit family. As to quaternary structure, NDH is composed of at least 16 different subunits, 5 of which are encoded in the nucleus. [4Fe-4S] cluster is required as a cofactor.

It localises to the plastid. The protein localises to the chloroplast thylakoid membrane. The enzyme catalyses a plastoquinone + NADH + (n+1) H(+)(in) = a plastoquinol + NAD(+) + n H(+)(out). It carries out the reaction a plastoquinone + NADPH + (n+1) H(+)(in) = a plastoquinol + NADP(+) + n H(+)(out). In terms of biological role, NDH shuttles electrons from NAD(P)H:plastoquinone, via FMN and iron-sulfur (Fe-S) centers, to quinones in the photosynthetic chain and possibly in a chloroplast respiratory chain. The immediate electron acceptor for the enzyme in this species is believed to be plastoquinone. Couples the redox reaction to proton translocation, and thus conserves the redox energy in a proton gradient. The protein is NAD(P)H-quinone oxidoreductase subunit K, chloroplastic of Lupinus luteus (European yellow lupine).